A 412-amino-acid polypeptide reads, in one-letter code: Multifunctional CCA protein (412 aa).

2 residues coordinate ATP: Gly8 and Arg11. 2 residues coordinate CTP: Gly8 and Arg11. Asp21 and Asp23 together coordinate Mg(2+). ATP contacts are provided by Arg91, Arg137, and Arg140. The CTP site is built by Arg91, Arg137, and Arg140. Residues 228–329 (TGIHTLMTLS…VKLFDSIDAW (102 aa)) enclose the HD domain.

Belongs to the tRNA nucleotidyltransferase/poly(A) polymerase family. Bacterial CCA-adding enzyme type 1 subfamily. Monomer. Can also form homodimers and oligomers. Requires Mg(2+) as cofactor. Ni(2+) is required as a cofactor.

It catalyses the reaction a tRNA precursor + 2 CTP + ATP = a tRNA with a 3' CCA end + 3 diphosphate. The enzyme catalyses a tRNA with a 3' CCA end + 2 CTP + ATP = a tRNA with a 3' CCACCA end + 3 diphosphate. Its function is as follows. Catalyzes the addition and repair of the essential 3'-terminal CCA sequence in tRNAs without using a nucleic acid template. Adds these three nucleotides in the order of C, C, and A to the tRNA nucleotide-73, using CTP and ATP as substrates and producing inorganic pyrophosphate. tRNA 3'-terminal CCA addition is required both for tRNA processing and repair. Also involved in tRNA surveillance by mediating tandem CCA addition to generate a CCACCA at the 3' terminus of unstable tRNAs. While stable tRNAs receive only 3'-terminal CCA, unstable tRNAs are marked with CCACCA and rapidly degraded. This Escherichia coli (strain SMS-3-5 / SECEC) protein is Multifunctional CCA protein.